The chain runs to 799 residues: Signal transducer and activator of transcription 5A (799 aa).

A Phosphotyrosine modification is found at tyrosine 90. Phosphoserine is present on serine 128. One can recognise an SH2 domain in the interval 589–686 (WNDGAILGFV…EVFSKYYTPV (98 aa)). The residue at position 682 (tyrosine 682) is a Phosphotyrosine. At tyrosine 699 the chain carries Phosphotyrosine; by JAK2. The interval 778-799 (DSLDPRLSPPAGLFASTRGSLS) is disordered. At serine 785 the chain carries Phosphoserine.

This sequence belongs to the transcription factor STAT family. As to quaternary structure, forms a homodimer or a heterodimer with a related family member. Binds NR3C1. Interacts with NCOA1 and SOCS7. Interacts with ERBB4. Interacts with EBF4. Interacts with CD69. Post-translationally, ISGylated. In terms of processing, tyrosine phosphorylated in response to KITLG/SCF, IL2, IL3, IL7, IL15, CSF2/GMCSF, GH1, PRL, EPO and THPO. Activated KIT promotes phosphorylation on tyrosine residues and subsequent translocation to the nucleus. Tyrosine phosphorylated in response to constitutively activated FGFR1, FGFR2, FGFR3 and FGFR4. Tyrosine phosphorylation is required for DNA-binding activity and dimerization. Serine phosphorylation is also required for maximal transcriptional activity. Tyrosine phosphorylated in response to signaling via activated FLT3; wild-type FLT3 results in much weaker phosphorylation than constitutively activated mutant FLT3. Alternatively, can be phosphorylated by JAK2 at Tyr-699.

It is found in the cytoplasm. It localises to the nucleus. Functionally, carries out a dual function: signal transduction and activation of transcription. Mediates cellular responses to the cytokine KITLG/SCF and other growth factors. May mediate cellular responses to activated FGFR1, FGFR2, FGFR3 and FGFR4. Binds to the GAS element and activates PRL-induced transcription. Regulates the expression of milk proteins during lactation. The protein is Signal transducer and activator of transcription 5A (STAT5A) of Sus scrofa (Pig).